The sequence spans 101 residues: Putative pterin-4-alpha-carbinolamine dehydratase (101 aa).

Belongs to the pterin-4-alpha-carbinolamine dehydratase family.

The enzyme catalyses (4aS,6R)-4a-hydroxy-L-erythro-5,6,7,8-tetrahydrobiopterin = (6R)-L-erythro-6,7-dihydrobiopterin + H2O. The polypeptide is Putative pterin-4-alpha-carbinolamine dehydratase (Ralstonia pickettii (strain 12J)).